The chain runs to 305 residues: MIKQRTLKRIVQATGVGLHTGKKVTLTLRPAPANTGVIYRRTDLNPPVDFPADAKSVRDTMLCTCLVNEHDVRISTVEHLNAALAGLGIDNIVIEVNAPEIPIMDGSAAPFVYLLLDAGIDELNCAKKFVRIKETVRVEDGDKWAEFKPYNGFSLDFTIDFNHPAIDSSNQRYAMNFSADAFMRQISRARTFGFMRDIEYLQSRGLCLGGSFDCAIVVDDYRVLNEDGLRFEDEFVRHKMLDAIGDLFMCGHNIIGAFIAYKSGHALNNKLLQAVLAKQEAWEYVTFQDDAELPLAFKAPSAVLA.

Histidine 79, histidine 238, and aspartate 242 together coordinate Zn(2+). Catalysis depends on histidine 265, which acts as the Proton donor.

Belongs to the LpxC family. Requires Zn(2+) as cofactor.

The enzyme catalyses a UDP-3-O-[(3R)-3-hydroxyacyl]-N-acetyl-alpha-D-glucosamine + H2O = a UDP-3-O-[(3R)-3-hydroxyacyl]-alpha-D-glucosamine + acetate. It functions in the pathway glycolipid biosynthesis; lipid IV(A) biosynthesis; lipid IV(A) from (3R)-3-hydroxytetradecanoyl-[acyl-carrier-protein] and UDP-N-acetyl-alpha-D-glucosamine: step 2/6. Catalyzes the hydrolysis of UDP-3-O-myristoyl-N-acetylglucosamine to form UDP-3-O-myristoylglucosamine and acetate, the committed step in lipid A biosynthesis. This Shigella boydii serotype 18 (strain CDC 3083-94 / BS512) protein is UDP-3-O-acyl-N-acetylglucosamine deacetylase.